The following is a 449-amino-acid chain: Bifunctional protein GlmU (449 aa).

The tract at residues 1-229 (MKLSAVILAA…EEDIYGINDR (229 aa)) is pyrophosphorylase. UDP-N-acetyl-alpha-D-glucosamine contacts are provided by residues 8-11 (LAAG), Lys22, Gln73, and 78-79 (GT). Mg(2+) is bound at residue Asp102. 4 residues coordinate UDP-N-acetyl-alpha-D-glucosamine: Gly139, Glu154, Asn169, and Asn227. Residue Asn227 participates in Mg(2+) binding. Residues 230–250 (VQLAQAENILRQRKNRELMLS) are linker. An N-acetyltransferase region spans residues 251 to 449 (GVSLMDPAST…AGQKHLPRKG (199 aa)). Residues Arg332 and Lys350 each coordinate UDP-N-acetyl-alpha-D-glucosamine. Catalysis depends on His362, which acts as the Proton acceptor. UDP-N-acetyl-alpha-D-glucosamine-binding residues include Tyr365 and Asn376. Acetyl-CoA is bound by residues Ala379, 385–386 (NY), Ser404, Ala422, and Arg439.

In the N-terminal section; belongs to the N-acetylglucosamine-1-phosphate uridyltransferase family. It in the C-terminal section; belongs to the transferase hexapeptide repeat family. Homotrimer. Mg(2+) serves as cofactor.

The protein localises to the cytoplasm. The catalysed reaction is alpha-D-glucosamine 1-phosphate + acetyl-CoA = N-acetyl-alpha-D-glucosamine 1-phosphate + CoA + H(+). It catalyses the reaction N-acetyl-alpha-D-glucosamine 1-phosphate + UTP + H(+) = UDP-N-acetyl-alpha-D-glucosamine + diphosphate. The protein operates within nucleotide-sugar biosynthesis; UDP-N-acetyl-alpha-D-glucosamine biosynthesis; N-acetyl-alpha-D-glucosamine 1-phosphate from alpha-D-glucosamine 6-phosphate (route II): step 2/2. Its pathway is nucleotide-sugar biosynthesis; UDP-N-acetyl-alpha-D-glucosamine biosynthesis; UDP-N-acetyl-alpha-D-glucosamine from N-acetyl-alpha-D-glucosamine 1-phosphate: step 1/1. It functions in the pathway bacterial outer membrane biogenesis; LPS lipid A biosynthesis. In terms of biological role, catalyzes the last two sequential reactions in the de novo biosynthetic pathway for UDP-N-acetylglucosamine (UDP-GlcNAc). The C-terminal domain catalyzes the transfer of acetyl group from acetyl coenzyme A to glucosamine-1-phosphate (GlcN-1-P) to produce N-acetylglucosamine-1-phosphate (GlcNAc-1-P), which is converted into UDP-GlcNAc by the transfer of uridine 5-monophosphate (from uridine 5-triphosphate), a reaction catalyzed by the N-terminal domain. The protein is Bifunctional protein GlmU of Syntrophomonas wolfei subsp. wolfei (strain DSM 2245B / Goettingen).